The sequence spans 261 residues: Segregation and condensation protein A (261 aa).

Belongs to the ScpA family. Component of a cohesin-like complex composed of ScpA, ScpB and the Smc homodimer, in which ScpA and ScpB bind to the head domain of Smc. The presence of the three proteins is required for the association of the complex with DNA.

The protein resides in the cytoplasm. In terms of biological role, participates in chromosomal partition during cell division. May act via the formation of a condensin-like complex containing Smc and ScpB that pull DNA away from mid-cell into both cell halves. The sequence is that of Segregation and condensation protein A from Leptospira interrogans serogroup Icterohaemorrhagiae serovar copenhageni (strain Fiocruz L1-130).